We begin with the raw amino-acid sequence, 231 residues long: Small ribosomal subunit protein uS3 (231 aa).

Residues 38-106 (IRVYLKNRLK…KTFVNIMEIK (69 aa)) form the KH type-2 domain.

The protein belongs to the universal ribosomal protein uS3 family. As to quaternary structure, part of the 30S ribosomal subunit. Forms a tight complex with proteins S10 and S14.

In terms of biological role, binds the lower part of the 30S subunit head. Binds mRNA in the 70S ribosome, positioning it for translation. This chain is Small ribosomal subunit protein uS3, found in Endomicrobium trichonymphae.